The primary structure comprises 29 residues: Beta-hexatoxin-Mr1a (29 aa).

3 disulfides stabilise this stretch: C2/C16, C9/C21, and C15/C26.

This sequence belongs to the neurotoxin 15 family. 01 (magi-5) subfamily. As to expression, expressed by the venom gland.

It is found in the secreted. Functionally, insect and vertebrate active toxin. Binds at site 4 of mammalian voltage-gated sodium channels and shifts the activation voltage of the mammalian rNav1.2a (SCN2A) channel to more hyperpolarized voltages, whereas the insect channel, DmNav1 (para), is not affected. Causes temporary paralysis when injected into lepidopteran larvae at 8.6 nmol/g. A low intracranial injection dose into mice causes lacrimation, closure of the eyes and sweating. A high injection dose causes extensive lacrimation and death. The polypeptide is Beta-hexatoxin-Mr1a (Macrothele raveni (Funnel-web spider)).